The following is a 454-amino-acid chain: Bifunctional protein GlmU (454 aa).

Residues 1 to 228 (MSPLHVVILA…PFEVQGVNNR (228 aa)) are pyrophosphorylase. UDP-N-acetyl-alpha-D-glucosamine is bound by residues 9–12 (LAAG), lysine 23, glutamine 74, 79–80 (GT), 101–103 (YGD), glycine 138, glutamate 153, asparagine 168, and asparagine 226. Aspartate 103 lines the Mg(2+) pocket. Asparagine 226 lines the Mg(2+) pocket. The segment at 229 to 249 (LQLAELERWYQRQQAERLMTE) is linker. Residues 250-454 (GASLADPARI…IAGWERPKKA (205 aa)) are N-acetyltransferase. UDP-N-acetyl-alpha-D-glucosamine is bound by residues arginine 332 and lysine 350. Catalysis depends on histidine 362, which acts as the Proton acceptor. Tyrosine 365 and asparagine 376 together coordinate UDP-N-acetyl-alpha-D-glucosamine. Acetyl-CoA is bound by residues alanine 379, 385–386 (NY), serine 404, alanine 422, and arginine 439.

The protein in the N-terminal section; belongs to the N-acetylglucosamine-1-phosphate uridyltransferase family. In the C-terminal section; belongs to the transferase hexapeptide repeat family. As to quaternary structure, homotrimer. Requires Mg(2+) as cofactor.

The protein resides in the cytoplasm. It carries out the reaction alpha-D-glucosamine 1-phosphate + acetyl-CoA = N-acetyl-alpha-D-glucosamine 1-phosphate + CoA + H(+). The enzyme catalyses N-acetyl-alpha-D-glucosamine 1-phosphate + UTP + H(+) = UDP-N-acetyl-alpha-D-glucosamine + diphosphate. It participates in nucleotide-sugar biosynthesis; UDP-N-acetyl-alpha-D-glucosamine biosynthesis; N-acetyl-alpha-D-glucosamine 1-phosphate from alpha-D-glucosamine 6-phosphate (route II): step 2/2. Its pathway is nucleotide-sugar biosynthesis; UDP-N-acetyl-alpha-D-glucosamine biosynthesis; UDP-N-acetyl-alpha-D-glucosamine from N-acetyl-alpha-D-glucosamine 1-phosphate: step 1/1. It functions in the pathway bacterial outer membrane biogenesis; LPS lipid A biosynthesis. Its function is as follows. Catalyzes the last two sequential reactions in the de novo biosynthetic pathway for UDP-N-acetylglucosamine (UDP-GlcNAc). The C-terminal domain catalyzes the transfer of acetyl group from acetyl coenzyme A to glucosamine-1-phosphate (GlcN-1-P) to produce N-acetylglucosamine-1-phosphate (GlcNAc-1-P), which is converted into UDP-GlcNAc by the transfer of uridine 5-monophosphate (from uridine 5-triphosphate), a reaction catalyzed by the N-terminal domain. This chain is Bifunctional protein GlmU, found in Marinobacter nauticus (strain ATCC 700491 / DSM 11845 / VT8) (Marinobacter aquaeolei).